We begin with the raw amino-acid sequence, 161 residues long: Nucleotide-binding protein Gura_0717 (161 aa).

This sequence belongs to the YajQ family.

Its function is as follows. Nucleotide-binding protein. In Geotalea uraniireducens (strain Rf4) (Geobacter uraniireducens), this protein is Nucleotide-binding protein Gura_0717.